The chain runs to 175 residues: ADP-ribosylation factor 6 (175 aa).

A lipid anchor (N-myristoyl glycine) is attached at Gly2. Lys3 carries N6-myristoyl lysine lipidation. GTP contacts are provided by residues 23-28 (AAGKTT), 41-44 (TIPT), 63-67 (DVGGQ), 122-125 (NKQD), and 155-156 (CA).

The protein belongs to the small GTPase superfamily. Arf family. In terms of assembly, interacts (when activated) with GGA1, GGA2 and GGA3; the interaction is required for proper subcellular location of GGA1, GGA2 and GGA3. Interacts with PIP5K1C. Interacts with USP6 (via Rab-GAP TBC domain). Interacts with RAB11FIP3 and RAB11FIP4. Interacts with HERC1. Interacts with ARHGAP21. Interacts with ASAP3; the interaction is stabilized by calcium ions. Interacts with NCS1/FREQ at the plasma membrane. Interacts with TBC1D24. Interacts with ECPAS. Interacts with MICALL1. Interacts with SPAG9 homodimers, forming heterotetramers. Interacts with CYTH3. Interacts with ASAP2. Interacts with UACA. Interacts with KIF23, forming heterodimers and heterotetramers. Interacts with C9orf72. Interacts (GTP-bound form) with TJAP1/PILT. Interacts with PRKAA2. Interacts with CD36 (when palmitoylated); this interaction mediates CD36 transport from the Golgi to the plasma membrane. Interacts with APBB1. As to quaternary structure, (Microbial infection) Interacts with the V.cholerae enterotoxin subunit A1; this causes a conformation change so that the toxin can bind NAD and catalyze the ADP-ribosylation of Gs alpha. (Microbial infection) Interacts with EspG from enteropathogenic E.coli. In terms of assembly, (Microbial infection) Identified in a complex with RAB1A and EspG from enteropathogenic E.coli. As to quaternary structure, (Microbial infection) Interacts with human enterovirus 71 protein VP1. GTP-bound form is myristoylated on Lys-3 by NMT1 and NMT2, allowing ARF6 to remain on membranes during the GTPase cycle, thereby promoting its activity. GDP-bound inactive form is demyristoylated on Lys-3 by SIRT2 at early endosomes or endocytic recycling compartment to allow its efficient activation by a guanine exchange factor (GEF) after GDP release. As to expression, ubiquitous, with higher levels in heart, substantia nigra, and kidney.

Its subcellular location is the cytoplasm. The protein localises to the cytosol. It is found in the cell membrane. It localises to the endosome membrane. The protein resides in the recycling endosome membrane. Its subcellular location is the cell projection. The protein localises to the filopodium membrane. It is found in the ruffle. It localises to the cleavage furrow. The protein resides in the midbody. Its subcellular location is the midbody ring. The protein localises to the early endosome membrane. It is found in the golgi apparatus. It localises to the trans-Golgi network membrane. The catalysed reaction is GTP + H2O = GDP + phosphate + H(+). With respect to regulation, activation is generally mediated by a guanine exchange factor (GEF), while inactivation through hydrolysis of bound GTP is catalyzed by a GTPase activating protein (GAP). Activated by ASAP3. Inactivated by ACAP1 and ACAP2. Activated by NGF via NTRK1. Activated by PRKAA2 through its C-terminal regulatory domain. Its function is as follows. GTP-binding protein involved in protein trafficking that regulates endocytic recycling and cytoskeleton remodeling. GTP-bound form plays an important role in the transport of multiple palmitoylated proteins form the Golgi to the plasma membrane. Required for normal completion of mitotic cytokinesis. Plays a role in the reorganization of the actin cytoskeleton and the formation of stress fibers. Involved in the regulation of dendritic spine development, contributing to the regulation of dendritic branching and filopodia extension. Potentiates the neurite outgrowth in primary neurons by interacting with the molecular adapter APBB1. Plays an important role in membrane trafficking, during junctional remodeling and epithelial polarization. Regulates surface levels of adherens junction proteins such as CDH1. Required for NTRK1 sorting to the recycling pathway from early endosomes. (Microbial infection) Functions as an allosteric activator of the cholera toxin catalytic subunit, an ADP-ribosyltransferase. Functionally, (Microbial infection) Plays a key role in the endocytosis of enterovirus 71 and thus viral entry into brain microvascular endothelial cells. This chain is ADP-ribosylation factor 6, found in Homo sapiens (Human).